A 432-amino-acid chain; its full sequence is Trigger factor (432 aa).

The PPIase FKBP-type domain maps to 161–246 (EDRVTIDFTG…LKKVEERELP (86 aa)).

Belongs to the FKBP-type PPIase family. Tig subfamily. Homodimer and monomer. In vivo most of the ribosomes are in complex with monomeric TF. Uncomplexed TF, however, is in a monomer-dimer equilibrium with approximately two thirds of TF existing in a dimeric state.

It localises to the cytoplasm. It carries out the reaction [protein]-peptidylproline (omega=180) = [protein]-peptidylproline (omega=0). Involved in protein export. Acts as a chaperone by maintaining the newly synthesized protein in an open conformation. Functions as a peptidyl-prolyl cis-trans isomerase. This chain is Trigger factor, found in Escherichia coli O139:H28 (strain E24377A / ETEC).